Here is a 490-residue protein sequence, read N- to C-terminus: Cytochrome P450 90D2 (490 aa).

Residues 4–24 traverse the membrane as a helical segment; it reads AAAGWAAPAFAVAAVVIWVVL. C437 contributes to the heme binding site.

Belongs to the cytochrome P450 family. Requires heme as cofactor. Expressed at low levels leaf blades, shoot apex and elongating stem.

It is found in the membrane. The catalysed reaction is 6-deoxoteasterone + reduced [NADPH--hemoprotein reductase] + O2 = 3-dehydro-6-deoxoteasterone + oxidized [NADPH--hemoprotein reductase] + 2 H2O + H(+). The protein operates within plant hormone biosynthesis; brassinosteroid biosynthesis. In terms of biological role, catalyzes the C6-oxidation step in brassinosteroids biosynthesis. May convert 6-deoxoteasterone (6-deoxoTE) to 3-dehydro-6-deoxoteasterone (6-deoxo3DT, 6-deoxo3DHT), and teasterone (TE) to 3-dehydroteasterone (3DT, 3-DHT). Involved in the elongation of leaf sheaths and stems. In Oryza sativa subsp. japonica (Rice), this protein is Cytochrome P450 90D2.